A 180-amino-acid chain; its full sequence is Small ribosomal subunit protein uS5 (180 aa).

One can recognise an S5 DRBM domain in the interval 13 to 76; the sequence is LEERVVQINR…EAAKKNLIRV (64 aa).

The protein belongs to the universal ribosomal protein uS5 family. In terms of assembly, part of the 30S ribosomal subunit. Contacts proteins S4 and S8.

Functionally, with S4 and S12 plays an important role in translational accuracy. In terms of biological role, located at the back of the 30S subunit body where it stabilizes the conformation of the head with respect to the body. The polypeptide is Small ribosomal subunit protein uS5 (Roseiflexus sp. (strain RS-1)).